The sequence spans 71 residues: uncharacterized protein (71 aa).

Positions 1 to 20 (MQKLNKHLKKKKQKRKKMKK) are disordered.

This is an uncharacterized protein from Methanocaldococcus jannaschii (strain ATCC 43067 / DSM 2661 / JAL-1 / JCM 10045 / NBRC 100440) (Methanococcus jannaschii).